The following is a 773-amino-acid chain: Cadherin-5 (773 aa).

An N-terminal signal peptide occupies residues 1-18; that stretch reads MKKLILLFSLFLAPAFSY. A propeptide spanning residues 19 to 40 is cleaved from the precursor; it reads KENQKINQNFSSNNTSHKRLKR. Residues N27, N31, and N32 are each glycosylated (N-linked (GlcNAc...) asparagine). Cadherin domains follow at residues 39 to 144, 145 to 251, 252 to 366, 367 to 474, and 474 to 582; these read KRDW…APIF, VQKI…FPVF, KHPS…PPVF, TKLS…APEL, and LVYP…DFTF. The Extracellular segment spans residues 41–595; sequence DWIWNRMHIR…RAKQVGVSVQ (555 aa). Residues E51, E52, D102, and E104 each coordinate Ca(2+). N121 is a glycosylation site (N-linked (GlcNAc...) asparagine). Ca(2+)-binding residues include D136, I137, N138, D139, and N140. Residue N150 is glycosylated (N-linked (GlcNAc...) asparagine). D170, D172, H179, and D224 together coordinate Ca(2+). Residues N263, N437, N519, and N531 are each glycosylated (N-linked (GlcNAc...) asparagine). Residues 596 to 617 traverse the membrane as a helical segment; sequence ALVAIFICIFTIIAVIALLILL. Residues 618–773 lie on the Cytoplasmic side of the membrane; the sequence is RKRHKKDLSG…GSEPNEDFVY (156 aa).

In terms of processing, N-glycosylated. O-glycosylated.

It is found in the cell junction. It localises to the adherens junction. The protein localises to the cell membrane. The protein resides in the cytoplasm. In terms of biological role, cadherins are calcium-dependent cell adhesion proteins. They preferentially interact with themselves in a homophilic manner in connecting cells; cadherins may thus contribute to the sorting of heterogeneous cell types. This cadherin may play a important role in endothelial cell biology through control of the cohesion and organization of the intercellular junctions. Plays a role in coupling actin fibers to cell junctions in endothelial cells. Associates with CTNND1/p120-catenin to control CADH5 endocytosis. This is Cadherin-5 from Gallus gallus (Chicken).